The chain runs to 113 residues: Large ribosomal subunit protein bL17 (113 aa).

Belongs to the bacterial ribosomal protein bL17 family. As to quaternary structure, part of the 50S ribosomal subunit. Contacts protein L32.

The sequence is that of Large ribosomal subunit protein bL17 from Clostridium perfringens (strain ATCC 13124 / DSM 756 / JCM 1290 / NCIMB 6125 / NCTC 8237 / Type A).